The chain runs to 353 residues: rRNA methyltransferase 1, mitochondrial (353 aa).

Residues 1–20 constitute a mitochondrion transit peptide; that stretch reads MALLSTVRGATWGRLVTRHF. Residues 311–353 form a disordered region; the sequence is PTEGERRQLLQDPQEPSARSEGLSMAQHPGLSSGPEKERQNEG.

Belongs to the class IV-like SAM-binding methyltransferase superfamily. RNA methyltransferase TrmH family.

It is found in the mitochondrion matrix. It carries out the reaction guanosine(1145) in 16S rRNA + S-adenosyl-L-methionine = 2'-O-methylguanosine(1145) in 16S rRNA + S-adenosyl-L-homocysteine + H(+). Its function is as follows. S-adenosyl-L-methionine-dependent 2'-O-ribose methyltransferase that catalyzes the formation of 2'-O-methylguanosine at position 1145 (Gm1145) in the 16S mitochondrial large subunit ribosomal RNA (mtLSU rRNA), a universally conserved modification in the peptidyl transferase domain of the mtLSU rRNA. The polypeptide is rRNA methyltransferase 1, mitochondrial (Homo sapiens (Human)).